The chain runs to 292 residues: ATP synthase gamma chain (292 aa).

It belongs to the ATPase gamma chain family. As to quaternary structure, F-type ATPases have 2 components, CF(1) - the catalytic core - and CF(0) - the membrane proton channel. CF(1) has five subunits: alpha(3), beta(3), gamma(1), delta(1), epsilon(1). CF(0) has three main subunits: a, b and c.

It is found in the cell inner membrane. In terms of biological role, produces ATP from ADP in the presence of a proton gradient across the membrane. The gamma chain is believed to be important in regulating ATPase activity and the flow of protons through the CF(0) complex. The protein is ATP synthase gamma chain of Brucella anthropi (strain ATCC 49188 / DSM 6882 / CCUG 24695 / JCM 21032 / LMG 3331 / NBRC 15819 / NCTC 12168 / Alc 37) (Ochrobactrum anthropi).